Here is a 217-residue protein sequence, read N- to C-terminus: GTPase IMAP family member GIMD1 (217 aa).

The region spanning 6–217 is the AIG1-type G domain; that stretch reads KMIINLALFG…ENCYQVLTFK (212 aa). GTP contacts are provided by residues 15 to 23, S36, and 148 to 150; these read GMTQSGKSS and HAE.

Belongs to the TRAFAC class TrmE-Era-EngA-EngB-Septin-like GTPase superfamily. AIG1/Toc34/Toc159-like paraseptin GTPase family. IAN subfamily.

In Homo sapiens (Human), this protein is GTPase IMAP family member GIMD1 (GIMD1).